Consider the following 719-residue polypeptide: Developmental regulator flbA (719 aa).

A compositionally biased stretch (polar residues) spans 1–17 (MPTSISTAPLSQGSPPS). 3 disordered regions span residues 1 to 39 (MPTS…STAA), 117 to 141 (IGST…SRKA), and 155 to 190 (LSPP…AAER). 2 stretches are compositionally biased toward low complexity: residues 123 to 135 (SSLR…GSLQ) and 158 to 171 (PLSD…QSSS). The tract at residues 214–411 (QTSSRLLRMT…QDGPNVKSSV (198 aa)) is fungal-DR. The 87-residue stretch at 425–511 (GLVGVKMARE…SKNAIYAITE (87 aa)) folds into the DEP domain. The 146-residue stretch at 540–685 (SNNARLNHIL…FLRDPKYSAI (146 aa)) folds into the RGS domain. Positions 694-719 (LIGGGRSYSPTPGNVPERSMSRSQRS) are disordered.

In terms of biological role, required for asexual sporulation and normal colony development. May be involved in brlA activation. Could play a regulatory role in controlling the flug-initiated signal transduction pathway that triggers the asexual reproduction. This is Developmental regulator flbA (flbA) from Emericella nidulans (strain FGSC A4 / ATCC 38163 / CBS 112.46 / NRRL 194 / M139) (Aspergillus nidulans).